The sequence spans 236 residues: MWDNHQALNQVADWLFTLAGLTTIYLMVQWTIHLPLLPLKEVHIRSNSGSGELRHVTREQVSDVVHREVGGNFLTIDLEAARHTFEKLAWVRVASVRRIWPNGLDVVVEEHVPLAHWGDSALVNRQGEIFNATSDEPMPIFEGPRESVREMVHQHAVFTKLLQPLKQDVEQVELSPRRAWRVRLGNGTILELGREHLEKRLERYVQTHDLVVARLNQRLSYVDLRYVSGFAARGTR.

Residues 1–14 are Cytoplasmic-facing; sequence MWDNHQALNQVADW. Residues 15–37 form a helical membrane-spanning segment; sequence LFTLAGLTTIYLMVQWTIHLPLL. Residues 37–111 form the POTRA domain; it reads LPLKEVHIRS…NGLDVVVEEH (75 aa). Residues 38–236 are Periplasmic-facing; that stretch reads PLKEVHIRSN…VSGFAARGTR (199 aa).

This sequence belongs to the FtsQ/DivIB family. FtsQ subfamily. As to quaternary structure, part of a complex composed of FtsB, FtsL and FtsQ.

It is found in the cell inner membrane. Essential cell division protein. May link together the upstream cell division proteins, which are predominantly cytoplasmic, with the downstream cell division proteins, which are predominantly periplasmic. May control correct divisome assembly. The protein is Cell division protein FtsQ of Nitrosospira multiformis (strain ATCC 25196 / NCIMB 11849 / C 71).